The primary structure comprises 315 residues: Replication factor C small subunit (315 aa).

43–50 (GSPGVGKT) contacts ATP.

The protein belongs to the activator 1 small subunits family. RfcS subfamily. In terms of assembly, heteromultimer composed of small subunits (RfcS) and large subunits (RfcL).

Its function is as follows. Part of the RFC clamp loader complex which loads the PCNA sliding clamp onto DNA. The chain is Replication factor C small subunit from Methanococcus vannielii (strain ATCC 35089 / DSM 1224 / JCM 13029 / OCM 148 / SB).